Reading from the N-terminus, the 249-residue chain is DNA polymerase sliding clamp (249 aa).

The protein belongs to the PCNA family. As to quaternary structure, homotrimer. The subunits circularize to form a toroid; DNA passes through its center. Replication factor C (RFC) is required to load the toroid on the DNA.

Sliding clamp subunit that acts as a moving platform for DNA processing. Responsible for tethering the catalytic subunit of DNA polymerase and other proteins to DNA during high-speed replication. This Thermococcus fumicolans protein is DNA polymerase sliding clamp.